The chain runs to 508 residues: Mitochondrial distribution and morphology protein 10 (508 aa).

The interval 160-195 (PAHPTSTRPTPPQTPPSHTRQPSEPSTPAPSPTPGN) is disordered.

It belongs to the MDM10 family. As to quaternary structure, component of the ER-mitochondria encounter structure (ERMES) or MDM complex, composed of MMM1, MDM10, MDM12 and MDM34. Associates with the mitochondrial outer membrane sorting assembly machinery SAM(core) complex.

It localises to the mitochondrion outer membrane. Functionally, component of the ERMES/MDM complex, which serves as a molecular tether to connect the endoplasmic reticulum and mitochondria. Components of this complex are involved in the control of mitochondrial shape and protein biogenesis and may function in phospholipid exchange. MDM10 is involved in the late assembly steps of the general translocase of the mitochondrial outer membrane (TOM complex). Functions in the TOM40-specific route of the assembly of outer membrane beta-barrel proteins, including the association of TOM40 with the receptor TOM22 and small TOM proteins. Can associate with the SAM(core) complex as well as the MDM12-MMM1 complex, both involved in late steps of the major beta-barrel assembly pathway, that is responsible for biogenesis of all outer membrane beta-barrel proteins. May act as a switch that shuttles between both complexes and channels precursor proteins into the TOM40-specific pathway. Plays a role in mitochondrial morphology and in the inheritance of mitochondria. The chain is Mitochondrial distribution and morphology protein 10 from Cryptococcus neoformans var. neoformans serotype D (strain B-3501A) (Filobasidiella neoformans).